Here is a 396-residue protein sequence, read N- to C-terminus: Elongation factor Tu (396 aa).

One can recognise a tr-type G domain in the interval 10–206 (KPHVNVGTIG…ALDTYIPTPE (197 aa)). Residues 19-26 (GHVDHGKT) are G1. 19–26 (GHVDHGKT) is a GTP binding site. Position 26 (T26) interacts with Mg(2+). The G2 stretch occupies residues 60 to 64 (GITIN). The G3 stretch occupies residues 81-84 (DCPG). Residues 81-85 (DCPGH) and 136-139 (NKCD) contribute to the GTP site. Positions 136-139 (NKCD) are G4. The tract at residues 174–176 (SAK) is G5.

This sequence belongs to the TRAFAC class translation factor GTPase superfamily. Classic translation factor GTPase family. EF-Tu/EF-1A subfamily. As to quaternary structure, monomer.

It is found in the cytoplasm. The catalysed reaction is GTP + H2O = GDP + phosphate + H(+). In terms of biological role, GTP hydrolase that promotes the GTP-dependent binding of aminoacyl-tRNA to the A-site of ribosomes during protein biosynthesis. The protein is Elongation factor Tu of Cupriavidus necator (strain ATCC 17699 / DSM 428 / KCTC 22496 / NCIMB 10442 / H16 / Stanier 337) (Ralstonia eutropha).